Here is a 36-residue protein sequence, read N- to C-terminus: Photosystem I reaction center subunit VIII (36 aa).

Residues 1-21 (MITFSFPSIFVPLVGLVFPAI) form a helical membrane-spanning segment.

Belongs to the PsaI family.

The protein resides in the plastid. Its subcellular location is the chloroplast thylakoid membrane. Its function is as follows. May help in the organization of the PsaL subunit. In Coffea arabica (Arabian coffee), this protein is Photosystem I reaction center subunit VIII.